The chain runs to 567 residues: MSCARITVTLPYRSAKTSIQRGITHYPALIRPRFSACTPLASAMPLSSTPLINGDNSQRKNTRQHMEESSSKRREYLLEETTRKLQRNDTESVEKLKLIDNIQQLGIGYYFEDAINAVLRSPFSTGEEDLFTAALRFRLLRHNGIEISPEIFLKFKDERGKFDESDTLGLLSLYEASNLGVAGEEILEEAMEFAEARLRRSLSEPAAPLHGEVAQALDVPRHLRMARLEARRFIEQYGKQSDHDGDLLELAILDYNQVQAQHQSELTEIIRWWKELGLVDKLSFGRDRPLECFLWTVGLLPEPKYSSVRIELAKAISILLVIDDIFDTYGEMDDLILFTDAIRRWDLEAMEGLPEYMKICYMALYNTTNEVCYKVLRDTGRIVLLNLKSTWIDMIEGFMEEAKWFNGGSAPKLEEYIENGVSTAGAYMAFAHIFFLIGEGVTHQNSQLFTQKPYPKVFSAAGRILRLWDDLGTAKEEQERGDLASCVQLFMKEKSLTEEEARSRILEEIKGLWRDLNGELVYNKNLPLSIIKVALNMARASQVVYKHDQDTYFSSVDNYVDALFFTQ.

The transit peptide at 1–63 (MSCARITVTL…GDNSQRKNTR (63 aa)) directs the protein to the chloroplast. A disordered region spans residues 48–75 (STPLINGDNSQRKNTRQHMEESSSKRRE). The segment covering 64–75 (QHMEESSSKRRE) has biased composition (basic and acidic residues). (2E)-geranyl diphosphate is bound by residues Arg286, Asp323, Asp327, Arg466, and Asp469. Asp323 and Asp327 together coordinate Mn(2+). The DDXXD motif signature appears at 323-327 (DDIFD). Residues Asp469, Thr473, and Glu477 each contribute to the Mn(2+) site.

Belongs to the terpene synthase family. Tpsb subfamily. In terms of assembly, homodimer. Mn(2+) serves as cofactor. As to expression, expressed in the peltate glandular trichomes of the leaves.

It is found in the plastid. It localises to the chloroplast. The catalysed reaction is (2E)-geranyl diphosphate + H2O = (2E)-geraniol + diphosphate. It participates in secondary metabolite biosynthesis; terpenoid biosynthesis. In terms of biological role, monoterpene synthase that catalyzes the formation of geraniol from geranyl diphosphate. This is Geraniol synthase, chloroplastic (GES) from Ocimum basilicum (Sweet basil).